Reading from the N-terminus, the 513-residue chain is Ribonuclease Y (513 aa).

The chain crosses the membrane as a helical span at residues 6 to 26 (YIIIAVVIIIICVILGLYVVD). Positions 203-288 (TVHVVNLPND…EMVEKAKKEV (86 aa)) constitute a KH domain. The region spanning 329–422 (VLKHSIEVSH…VQAADAISAA (94 aa)) is the HD domain.

Belongs to the RNase Y family.

The protein localises to the cell membrane. In terms of biological role, endoribonuclease that initiates mRNA decay. The chain is Ribonuclease Y from Clostridium botulinum (strain Langeland / NCTC 10281 / Type F).